The following is a 161-amino-acid chain: MGEIVFTEKQEALVKESWEILKQDIPKYSLHFFSQILEIAPAAKDMFSFLRDTDEVPHNNPKLKAHAVKVFKMTCETAIQLREKGKVVVADTTLQYLGSVHFKSGVLDPHFEVVKEALVRTLKEGLGEKYNEEVEGAWSKAYDHLALAIKAEMKQEDSQKP.

A Globin domain is found at 5-154 (VFTEKQEALV…LALAIKAEMK (150 aa)). The Homodimerization motif lies at 38–42 (EIAPA). Residues S48, K62, H66, and H101 each coordinate heme b. The Homodimerization signature appears at 108–120 (DPHFEVVKEALVR).

This sequence belongs to the plant globin family. Homodimer. Heme b is required as a cofactor.

The protein resides in the cytoplasm. It is found in the nucleus. The catalysed reaction is Fe(III)-heme b-[protein] + nitric oxide + H2O = Fe(II)-heme b-[protein] + nitrite + 2 H(+). Phytoglobin that reduces nitrite to nitric oxide (NO) under anoxic conditions (e.g. during flooding or in waterlogged soil). May not function as an oxygen storage or transport protein. Has an unusually high affinity for O(2) through an hexacoordinate heme iron because of a very low dissociation constant. This is Anaerobic nitrite reductase HB2 from Brassica napus (Rape).